The following is a 602-amino-acid chain: Wings apart-like protein homolog 1 (602 aa).

Positions 34-66 are disordered; that stretch reads NKQKRSPGQTVSKRLHKKQRVVSNPDLSLPSSP. Residues 54–66 are compositionally biased toward polar residues; sequence VVSNPDLSLPSSP. Positions 160–492 constitute a WAPL domain; sequence IQMKSIHELR…LGLVEESHEF (333 aa).

It belongs to the WAPL family.

The protein resides in the nucleus. It localises to the chromosome. Functionally, regulator of sister chromatid cohesion in mitosis which negatively regulates cohesin association with chromatin. In Schizosaccharomyces pombe (strain 972 / ATCC 24843) (Fission yeast), this protein is Wings apart-like protein homolog 1 (wpl1).